The sequence spans 249 residues: Glucosamine-6-phosphate deaminase (249 aa).

D67 (proton acceptor; for enolization step) is an active-site residue. N136 functions as the For ring-opening step in the catalytic mechanism. H138 functions as the Proton acceptor; for ring-opening step in the catalytic mechanism. E143 (for ring-opening step) is an active-site residue.

The protein belongs to the glucosamine/galactosamine-6-phosphate isomerase family. NagB subfamily.

It carries out the reaction alpha-D-glucosamine 6-phosphate + H2O = beta-D-fructose 6-phosphate + NH4(+). It participates in amino-sugar metabolism; N-acetylneuraminate degradation; D-fructose 6-phosphate from N-acetylneuraminate: step 5/5. Its function is as follows. Catalyzes the reversible isomerization-deamination of glucosamine 6-phosphate (GlcN6P) to form fructose 6-phosphate (Fru6P) and ammonium ion. This Clostridioides difficile (strain 630) (Peptoclostridium difficile) protein is Glucosamine-6-phosphate deaminase.